Consider the following 612-residue polypeptide: Dihydroxy-acid dehydratase (612 aa).

Asp81 contacts Mg(2+). Cys122 contributes to the [2Fe-2S] cluster binding site. Positions 123 and 124 each coordinate Mg(2+). The residue at position 124 (Lys124) is an N6-carboxylysine. A [2Fe-2S] cluster-binding site is contributed by Cys195. Position 491 (Glu491) interacts with Mg(2+). Ser517 acts as the Proton acceptor in catalysis.

It belongs to the IlvD/Edd family. Homodimer. [2Fe-2S] cluster is required as a cofactor. The cofactor is Mg(2+).

The enzyme catalyses (2R)-2,3-dihydroxy-3-methylbutanoate = 3-methyl-2-oxobutanoate + H2O. It catalyses the reaction (2R,3R)-2,3-dihydroxy-3-methylpentanoate = (S)-3-methyl-2-oxopentanoate + H2O. It functions in the pathway amino-acid biosynthesis; L-isoleucine biosynthesis; L-isoleucine from 2-oxobutanoate: step 3/4. The protein operates within amino-acid biosynthesis; L-valine biosynthesis; L-valine from pyruvate: step 3/4. Functionally, functions in the biosynthesis of branched-chain amino acids. Catalyzes the dehydration of (2R,3R)-2,3-dihydroxy-3-methylpentanoate (2,3-dihydroxy-3-methylvalerate) into 2-oxo-3-methylpentanoate (2-oxo-3-methylvalerate) and of (2R)-2,3-dihydroxy-3-methylbutanoate (2,3-dihydroxyisovalerate) into 2-oxo-3-methylbutanoate (2-oxoisovalerate), the penultimate precursor to L-isoleucine and L-valine, respectively. The chain is Dihydroxy-acid dehydratase from Rhizobium rhizogenes (strain K84 / ATCC BAA-868) (Agrobacterium radiobacter).